Consider the following 498-residue polypeptide: Glycerol kinase (498 aa).

Position 12 (threonine 12) interacts with ADP. ATP is bound by residues threonine 12, threonine 13, and serine 14. Threonine 12 contacts sn-glycerol 3-phosphate. Arginine 16 provides a ligand contact to ADP. Residues arginine 82, glutamate 83, tyrosine 134, and aspartate 241 each coordinate sn-glycerol 3-phosphate. Residues arginine 82, glutamate 83, tyrosine 134, aspartate 241, and glutamine 242 each contribute to the glycerol site. ADP is bound by residues threonine 263 and glycine 310. Residues threonine 263, glycine 310, glutamine 314, and glycine 411 each coordinate ATP. Glycine 411 and asparagine 415 together coordinate ADP.

This sequence belongs to the FGGY kinase family.

The enzyme catalyses glycerol + ATP = sn-glycerol 3-phosphate + ADP + H(+). It functions in the pathway polyol metabolism; glycerol degradation via glycerol kinase pathway; sn-glycerol 3-phosphate from glycerol: step 1/1. Its activity is regulated as follows. Inhibited by fructose 1,6-bisphosphate (FBP). Key enzyme in the regulation of glycerol uptake and metabolism. Catalyzes the phosphorylation of glycerol to yield sn-glycerol 3-phosphate. The sequence is that of Glycerol kinase from Janthinobacterium sp. (strain Marseille) (Minibacterium massiliensis).